Reading from the N-terminus, the 662-residue chain is Protein associated with UVRAG as autophagy enhancer (662 aa).

Disordered regions lie at residues 1–34 (MVSQ…RLLN) and 58–131 (DVQQ…SLSS). A compositionally biased stretch (low complexity) spans 58-71 (DVQQQPQDLQSQVP). The segment covering 100–113 (AETTLSEDTTDSVG) has biased composition (polar residues). A compositionally biased stretch (low complexity) spans 114–131 (SASPHGSSEKSSSFSLSS). At Ser157 the chain carries Phosphoserine; by MTOR. The interval 196–235 (EVFVLPVDVEKENAHFYVADMIISAMEKMKCNILSQQQTE) is interaction with UVRAG. 5 positions are modified to N6-acetyllysine: Lys483, Lys523, Lys533, Lys573, and Lys633.

In terms of assembly, interacts with UVRAG; the interaction is direct and promotes association with the PI3K/PI3KC3 and HOPS complexes. Interacts with STX17. In terms of processing, phosphorylated by MTOR at Ser-157 under nutrient-rich conditions. Phosphorylation prevents acetylation by KAT5/TIP60 and impairs RUBCNL/PACER function and autophagosome maturation. Under autophagy induction, Phosphorylation by MTOR is repressed, enabling acetylation by KAT5/TIP60. Acetylated by KAT5/TIP60 under autophagy induction, promoting autophagosome maturation and lipid metabolism. Acetylation is prevented by phosphorylation by MTOR. Lys-483 and Lys-573 constitute the key sites for tuning function in autophagy. In terms of tissue distribution, expressed weakly in cervical carcinoma cell lines.

Its subcellular location is the cytoplasmic vesicle. It localises to the autophagosome membrane. Its function is as follows. Regulator of autophagy that promotes autophagosome maturation by facilitating the biogenesis of phosphatidylinositol 3-phosphate (PtdIns(3)P) in late steps of autophagy. Acts by antagonizing RUBCN, thereby stimulating phosphatidylinositol 3-kinase activity of the PI3K/PI3KC3 complex. Following anchorage to the autophagosomal SNARE STX17, promotes the recruitment of PI3K/PI3KC3 and HOPS complexes to the autophagosome to regulate the fusion specificity of autophagosomes with late endosomes/lysosomes. Binds phosphoinositides phosphatidylinositol 3-phosphate (PtdIns(3)P), 4-phosphate (PtdIns(4)P) and 5-phosphate (PtdIns(5)P). In addition to its role in autophagy, acts as a regulator of lipid and glycogen homeostasis. May act as a tumor suppressor. This Homo sapiens (Human) protein is Protein associated with UVRAG as autophagy enhancer.